A 388-amino-acid chain; its full sequence is GTPase Obg (388 aa).

An Obg domain is found at 1-159 (MKFVDEAVIR…RSLKLELLLL (159 aa)). Positions 160–333 (ADVGLLGMPN…LATKLLDFIQ (174 aa)) constitute an OBG-type G domain. GTP is bound by residues 166 to 173 (GMPNAGKS), 191 to 195 (FTTLV), 213 to 216 (DIPG), 283 to 286 (NKAD), and 314 to 316 (SAY). Mg(2+)-binding residues include serine 173 and threonine 193.

This sequence belongs to the TRAFAC class OBG-HflX-like GTPase superfamily. OBG GTPase family. Monomer. Requires Mg(2+) as cofactor.

Its subcellular location is the cytoplasm. Its function is as follows. An essential GTPase which binds GTP, GDP and possibly (p)ppGpp with moderate affinity, with high nucleotide exchange rates and a fairly low GTP hydrolysis rate. Plays a role in control of the cell cycle, stress response, ribosome biogenesis and in those bacteria that undergo differentiation, in morphogenesis control. The chain is GTPase Obg from Shewanella sp. (strain MR-4).